We begin with the raw amino-acid sequence, 241 residues long: tRNA pseudouridine synthase B (241 aa).

Aspartate 45 serves as the catalytic Nucleophile.

The protein belongs to the pseudouridine synthase TruB family. Type 1 subfamily.

The enzyme catalyses uridine(55) in tRNA = pseudouridine(55) in tRNA. In terms of biological role, responsible for synthesis of pseudouridine from uracil-55 in the psi GC loop of transfer RNAs. The sequence is that of tRNA pseudouridine synthase B from Chlamydia trachomatis serovar L2 (strain ATCC VR-902B / DSM 19102 / 434/Bu).